Consider the following 43-residue polypeptide: Protein PsbN (43 aa).

A helical transmembrane segment spans residues 4–24 (AIVLSISMAAVVVAITGISIY).

It belongs to the PsbN family.

The protein resides in the cellular thylakoid membrane. In terms of biological role, may play a role in photosystem I and II biogenesis. This is Protein PsbN from Nostoc punctiforme (strain ATCC 29133 / PCC 73102).